Reading from the N-terminus, the 162-residue chain is UPF0114 protein Psyr_4257 (162 aa).

The next 4 membrane-spanning stretches (helical) occupy residues 15–35, 53–73, 109–129, and 136–156; these read LLAP…LKFF, LILV…LVMV, VAAS…MDAT, and LMWY…MGYL.

This sequence belongs to the UPF0114 family.

It is found in the cell membrane. This is UPF0114 protein Psyr_4257 from Pseudomonas syringae pv. syringae (strain B728a).